The primary structure comprises 180 residues: Riboflavin kinase (180 aa).

Mg(2+)-binding residues include Thr-40 and Asn-42. Glu-117 serves as the catalytic Nucleophile.

The protein belongs to the flavokinase family. Zn(2+) serves as cofactor. Requires Mg(2+) as cofactor.

It carries out the reaction riboflavin + ATP = FMN + ADP + H(+). It participates in cofactor biosynthesis; FMN biosynthesis; FMN from riboflavin (ATP route): step 1/1. In terms of biological role, catalyzes the phosphorylation of riboflavin (vitamin B2) to form flavin mononucleotide (FMN) coenzyme. This chain is Riboflavin kinase (FMN1), found in Meyerozyma guilliermondii (strain ATCC 6260 / CBS 566 / DSM 6381 / JCM 1539 / NBRC 10279 / NRRL Y-324) (Yeast).